A 549-amino-acid chain; its full sequence is Adhesion G protein-coupled receptor G3 (549 aa).

The first 20 residues, 1–20 (MATPRGLGALLLLLLLPTSG), serve as a signal peptide directing secretion. Topologically, residues 21–270 (QEKPTEGPRN…DQSTVHILTR (250 aa)) are extracellular. N98, N144, and N210 each carry an N-linked (GlcNAc...) asparagine glycan. The 156-residue stretch at 107–262 (FYFSLEPSQV…ALLLRPTLDQ (156 aa)) folds into the GAIN-B domain. Intrachain disulfides connect C215–C244 and C233–C246. The tract at residues 215–262 (CVFWDVTKGTTGDWSSEGCSTEVRPEGTVCCCDHLTFFALLLRPTLDQ) is GPS. The stachel stretch occupies residues 251–259 (FFALLLRPT). A helical transmembrane segment spans residues 271 to 295 (ISQAGCGVSMIFLAFTIILYAFLRL). The Cytoplasmic segment spans residues 296–304 (SRERFKSED). A helical transmembrane segment spans residues 305-326 (APKIHVALGGSLFLLNLAFLVN). At 327 to 338 (VGSGSKGSDAAC) the chain is on the extracellular side. Cysteines 338 and 420 form a disulfide. A helical membrane pass occupies residues 339 to 364 (WARGAVFHYFLLCAFTWMGLEAFHLY). Over 365 to 378 (LLAVRVFNTYFGHY) the chain is Cytoplasmic. A helical membrane pass occupies residues 379-400 (FLKLSLVGWGLPALMVIGTGSA). Topologically, residues 401 to 428 (NSYGLYTIRDRENRTSLELCWFREGTTM) are extracellular. N-linked (GlcNAc...) asparagine glycosylation is present at N413. Residues 429–454 (YALYITVHGYFLITFLFGMVVLALVV) traverse the membrane as a helical segment. Residues 455–474 (WKIFTLSRATAVKERGKNRK) lie on the Cytoplasmic side of the membrane. A helical membrane pass occupies residues 475-495 (KVLTLLGLSSLVGVTWGLAIF). The Extracellular segment spans residues 496 to 501 (TPLGLS). The helical transmembrane segment at 502 to 525 (TVYIFALFNSLQGVFICCWFTILY) threads the bilayer. N510 serves as a coordination point for cortisol. At 526-549 (LPSQSTTVSSSTARLDQAHSASQE) the chain is on the cytoplasmic side.

The protein belongs to the G-protein coupled receptor 2 family. Adhesion G-protein coupled receptor (ADGR) subfamily. As to quaternary structure, heterodimer of 2 chains generated by proteolytic processing; the large extracellular N-terminal fragment and the membrane-bound C-terminal fragment predominantly remain associated and non-covalently linked. Interacts with PRTN3; this interaction induces the activation of PAR2. Interacts with GNAO1 (when palmitoylated). In terms of processing, autoproteolytically processed at the GPS region of the GAIN-B domain; this cleavage modulates receptor activity. Post-translationally, O- and N-glycosylated. In terms of tissue distribution, expressed in cultured primary dermal lymphatic endothelial cells. Highly expressed in polymorphonuclear cells (PMNs) including neutrophilic, eosinophilic, and basophilic granulocytes.

It localises to the cell membrane. Forms a heterodimer of 2 chains generated by proteolytic processing that remain associated through non-covalent interactions mediated by the GAIN-B domain. In the inactivated receptor, the Stachel sequence (also named stalk) is embedded in the GAIN-B domain, where it adopts a beta-strand conformation. On activation, the Stachel moves into the 7 transmembrane region and adopts a twisted hook-shaped configuration that forms contacts within the receptor, leading to coupling of a G-alpha protein, which activates signaling. The cleaved GAIN-B and N-terminal domains can then dissociate from the rest of the receptor. Its function is as follows. Adhesion G-protein coupled receptor (aGPCR) for glucocorticoid hormones such as cortisol, cortisone and 11-deoxycortisol. Ligand binding causes a conformation change that triggers signaling via guanine nucleotide-binding proteins (G proteins) and modulates the activity of downstream effectors, such as adenylate cyclase. ADGRG3/GPR97 is coupled to G(o)/GNAO1 G proteins and mediates signaling by inhibiting adenylate cyclase activity. May also signal through G-alpha(q)-proteins; additional evidence are however required to confirm this result in vivo. Plays a role in the regulation of various processes including B-cell development, inflammation or innate immunity. Regulates migration of lymphatic endothelial cells in vitro via the small GTPases RhoA and CDC42. Antibody ligation leads to the production and activation of antimicrobial mediators like reactive oxygen species (ROS) and myeloperoxidase (MPO) as well as enhanced bacteria uptake and killing by granulocytes. Additionally, collaborates with protease-activated receptor 2/PAR2 to stimulate neutrophil-driven antimicrobial responses and endothelial cell activation. This is Adhesion G protein-coupled receptor G3 from Homo sapiens (Human).